A 344-amino-acid polypeptide reads, in one-letter code: uncharacterized protein (344 aa).

It belongs to the glycosyltransferase 2 family.

This is an uncharacterized protein from Escherichia coli (strain K12).